The following is a 336-amino-acid chain: HTH-type transcriptional regulator SyrM (336 aa).

The 58-residue stretch at 41 to 98 (IDLNLLVALEALLEYRNVTHAGQHIGRSQPAMSRALGRLRGLFNDDLLVRSSTGLIPT) folds into the HTH lysR-type domain. Residues 58-77 (VTHAGQHIGRSQPAMSRALG) constitute a DNA-binding region (H-T-H motif).

The protein belongs to the LysR transcriptional regulatory family.

In terms of biological role, acts in trans to stimulate nod gene expression via nodD3 and exo gene expression via SyrA. The chain is HTH-type transcriptional regulator SyrM (syrM) from Rhizobium etli.